We begin with the raw amino-acid sequence, 281 residues long: MKIIRARTAGFCMGVSLALRKLDREVTENNAPIATLGPIIHNPQVMAHYEERGVRCLRDTAQVVPGQRVVIRAHGIPVAEETALKATGASVVDATCPKVKRAQLGIAEERGRGGTLLLFGEADHPEVRGLLSYAGEGAMVFGSLDELKGLPLRDDVAYFLAAQTTQDRAGFEDVVSWLRQRLGHDIPVLQTICDATRKRQQEAVDIARRVQAMVVVGGFDSGNTRRLADVARAQGVFTVHVETVDQLPVDELRKKSVIGLTAGASTPKSLIDAVQRFLESL.

A [4Fe-4S] cluster-binding site is contributed by Cys12. Residues His41 and His74 each coordinate (2E)-4-hydroxy-3-methylbut-2-enyl diphosphate. Positions 41 and 74 each coordinate dimethylallyl diphosphate. Residues His41 and His74 each contribute to the isopentenyl diphosphate site. Cys96 is a binding site for [4Fe-4S] cluster. His124 is a (2E)-4-hydroxy-3-methylbut-2-enyl diphosphate binding site. His124 is a dimethylallyl diphosphate binding site. His124 contacts isopentenyl diphosphate. Glu126 serves as the catalytic Proton donor. Thr164 lines the (2E)-4-hydroxy-3-methylbut-2-enyl diphosphate pocket. Cys193 provides a ligand contact to [4Fe-4S] cluster. The (2E)-4-hydroxy-3-methylbut-2-enyl diphosphate site is built by Ser221, Asn223, and Ser265. The dimethylallyl diphosphate site is built by Ser221, Asn223, and Ser265. Isopentenyl diphosphate-binding residues include Ser221, Asn223, and Ser265.

Belongs to the IspH family. It depends on [4Fe-4S] cluster as a cofactor.

The enzyme catalyses isopentenyl diphosphate + 2 oxidized [2Fe-2S]-[ferredoxin] + H2O = (2E)-4-hydroxy-3-methylbut-2-enyl diphosphate + 2 reduced [2Fe-2S]-[ferredoxin] + 2 H(+). It catalyses the reaction dimethylallyl diphosphate + 2 oxidized [2Fe-2S]-[ferredoxin] + H2O = (2E)-4-hydroxy-3-methylbut-2-enyl diphosphate + 2 reduced [2Fe-2S]-[ferredoxin] + 2 H(+). Its pathway is isoprenoid biosynthesis; dimethylallyl diphosphate biosynthesis; dimethylallyl diphosphate from (2E)-4-hydroxy-3-methylbutenyl diphosphate: step 1/1. It participates in isoprenoid biosynthesis; isopentenyl diphosphate biosynthesis via DXP pathway; isopentenyl diphosphate from 1-deoxy-D-xylulose 5-phosphate: step 6/6. Catalyzes the conversion of 1-hydroxy-2-methyl-2-(E)-butenyl 4-diphosphate (HMBPP) into a mixture of isopentenyl diphosphate (IPP) and dimethylallyl diphosphate (DMAPP). Acts in the terminal step of the DOXP/MEP pathway for isoprenoid precursor biosynthesis. This is 4-hydroxy-3-methylbut-2-enyl diphosphate reductase from Nitratidesulfovibrio vulgaris (strain DSM 19637 / Miyazaki F) (Desulfovibrio vulgaris).